The sequence spans 550 residues: Tyrosine-protein phosphatase 1 (550 aa).

The region spanning leucine 260 to leucine 539 is the Tyrosine-protein phosphatase domain. 2 positions are modified to phosphoserine: serine 318 and serine 320. The Phosphocysteine intermediate role is filled by cysteine 470.

Belongs to the protein-tyrosine phosphatase family. Non-receptor class subfamily.

It is found in the cytoplasm. It carries out the reaction O-phospho-L-tyrosyl-[protein] + H2O = L-tyrosyl-[protein] + phosphate. In terms of biological role, plays a role in inhibiting the onset of mitosis. Dephosphorylates sty1/spc1 and wis1/spc2/sty2. This is Tyrosine-protein phosphatase 1 (pyp1) from Schizosaccharomyces pombe (strain 972 / ATCC 24843) (Fission yeast).